Consider the following 124-residue polypeptide: Large ribosomal subunit protein eL22 (124 aa).

This sequence belongs to the eukaryotic ribosomal protein eL22 family. As to quaternary structure, component of the large ribosomal subunit. Mature ribosomes consist of a small (40S) and a large (60S) subunit. The 40S subunit contains about 32 different proteins and 1 molecule of RNA (18S). The 60S subunit contains 45 different proteins and 3 molecules of RNA (25S, 5.8S and 5S).

The protein localises to the cytoplasm. Its function is as follows. Component of the ribosome, a large ribonucleoprotein complex responsible for the synthesis of proteins in the cell. The small ribosomal subunit (SSU) binds messenger RNAs (mRNAs) and translates the encoded message by selecting cognate aminoacyl-transfer RNA (tRNA) molecules. The large subunit (LSU) contains the ribosomal catalytic site termed the peptidyl transferase center (PTC), which catalyzes the formation of peptide bonds, thereby polymerizing the amino acids delivered by tRNAs into a polypeptide chain. The nascent polypeptides leave the ribosome through a tunnel in the LSU and interact with protein factors that function in enzymatic processing, targeting, and the membrane insertion of nascent chains at the exit of the ribosomal tunnel. This Candida albicans (strain SC5314 / ATCC MYA-2876) (Yeast) protein is Large ribosomal subunit protein eL22.